The primary structure comprises 337 residues: UDP-glucose 4-epimerase (337 aa).

Residues 11 to 12 (YI), 31 to 36 (DNLSNA), 58 to 59 (DL), 80 to 84 (FAGLK), Asn99, Ser124, Tyr149, Lys153, and Phe178 contribute to the NAD(+) site. The substrate site is built by Ser124 and Tyr149. The active-site Proton acceptor is Tyr149. Substrate is bound by residues Asn179, 199 to 200 (NL), 216 to 218 (GIF), Arg231, and 292 to 295 (RDGD).

The protein belongs to the NAD(P)-dependent epimerase/dehydratase family. As to quaternary structure, homodimer. It depends on NAD(+) as a cofactor.

It carries out the reaction UDP-alpha-D-glucose = UDP-alpha-D-galactose. It functions in the pathway carbohydrate metabolism; galactose metabolism. Functionally, involved in the metabolism of galactose. Catalyzes the conversion of UDP-galactose (UDP-Gal) to UDP-glucose (UDP-Glc) through a mechanism involving the transient reduction of NAD. The polypeptide is UDP-glucose 4-epimerase (galE) (Erwinia amylovora (Fire blight bacteria)).